The sequence spans 2090 residues: Host cell factor 1 (2090 aa).

At Ala2 the chain carries N-acetylalanine. Ser6 bears the Phosphoserine mark. Kelch repeat units follow at residues 44–89 (LIVV…GFVC), 93–140 (RLLV…RLGH), 148–194 (KCYL…ITYG), 217–265 (KLVI…TIGN), and 266–313 (KMYV…LMDT). Residues Lys105, Lys163, and Lys244 each participate in a glycyl lysine isopeptide (Lys-Gly) (interchain with G-Cter in ubiquitin) cross-link. A Glycyl lysine isopeptide (Lys-Gly) (interchain with G-Cter in SUMO2) cross-link involves residue Lys282. Lys288 is subject to N6-acetyllysine. A Glycyl lysine isopeptide (Lys-Gly) (interchain with G-Cter in ubiquitin) cross-link involves residue Lys363. The Fibronectin type-III 1 domain occupies 366–469 (PPARVQLVRA…TIQVLPTVPG (104 aa)). Residues 407–434 (ATATSPTPNPVPSVPANPPKSPAPAAAA) are disordered. The residue at position 411 (Ser411) is a Phosphoserine. A compositionally biased stretch (pro residues) spans 413 to 428 (TPNPVPSVPANPPKSP). A required for interaction with OGT region spans residues 500–550 (LVTMRPAGQAGKAPVTVTSLPASVRMVVPTQSAQGTVIGSNPQMSGMAALA). 2 positions are modified to omega-N-methylarginine: Arg504 and Arg524. Residues Ser598, Ser666, and Ser669 each carry the phosphoserine modification. The segment at 610-722 (LKTAAAQVGT…KGPLPAGTIL (113 aa)) is interaction with SIN3A. The interval 750 to 902 (ILGISSVSPS…SLAGAGAHST (153 aa)) is interaction with ZBTB17. Residue Lys813 is modified to N6-acetyllysine. The tract at residues 813-912 (KIITAVPKIA…SASLATPITT (100 aa)) is interaction with GABP2. 3 HCF repeat repeats span residues 1010-1035 (TLVC…TVVA), 1072-1097 (VRVC…ATSN), and 1101-1126 (QHGC…AMSS). Positions 1098 to 1140 (MAGQHGCSNPPCETHETGTTSTATTAMSSMGTGQQRDTRHTSS) are disordered. Residues 1114 to 1130 (TGTTSTATTAMSSMGTG) show a composition bias toward low complexity. Residues 1157–1182 (TQGTVKPQCQTQQANMTNTTMTVQAT) form an HCF repeat 4; degenerate repeat. At Ser1204 the chain carries Phosphoserine. Arg1216 carries the asymmetric dimethylarginine modification. Ser1223 is subject to Phosphoserine. HCF repeat repeat units follow at residues 1295–1320 (TQVC…SNAG) and 1323–1348 (QRVC…ATSN). Disordered stretches follow at residues 1302–1374 (PCET…TTST) and 1444–1486 (TVTS…TTVS). Low complexity predominate over residues 1308–1321 (TGTTNTATTSNAGS). One copy of the HCF repeat 7; degenerate repeat lies at 1358 to 1383 (QQPAGGRPCETHQTTSTGTTMSVSVG). One copy of the HCF repeat 8 repeat lies at 1423–1448 (QRVCSNPPCETHETGTTHTATTVTSN). A compositionally biased stretch (polar residues) spans 1465–1475 (VVSTQGDSANI). Low complexity predominate over residues 1476-1486 (TSSSGITTTVS). The residue at position 1500 (Thr1500) is a Phosphothreonine. Ser1506, Ser1559, and Ser1826 each carry phosphoserine. Fibronectin type-III domains are found at residues 1853 to 1943 (PPPP…TCLP) and 1945 to 2061 (FPGA…TSKD). Glycyl lysine isopeptide (Lys-Gly) (interchain with G-Cter in ubiquitin) cross-links involve residues Lys1862 and Lys1863. Ser1893 carries the post-translational modification Phosphoserine. The segment at 2049-2090 (ATQVRWLQETSKDSSGTKPASKRPMSSPEMKSAPKKSKADGQ) is disordered. At Lys2060 the chain carries N6-acetyllysine. A Glycyl lysine isopeptide (Lys-Gly) (interchain with G-Cter in SUMO2) cross-link involves residue Lys2079.

In terms of assembly, composed predominantly of six polypeptides ranging from 110 to 150 kDa and a minor 300 kDa polypeptide. The majority of N- and C-terminal cleavage products remain tightly, albeit non-covalently, associated. Interacts with POU2F1, CREB3, ZBTB17, EGR2, E2F4, CREBZF, SP1, GABP2, Sin3 HDAC complex (SIN3A, HDAC1, HDAC2, SUDS3), SAP30, SIN3B and FHL2. Component of a MLL1 complex, composed of at least the core components KMT2A/MLL1, ASH2L, HCFC1, WDR5 and RBBP5, as well as the facultative components BACC1, CHD8, DPY30, E2F6, HCFC2, HSP70, INO80C, KANSL1, LAS1L, MAX, MCRS1, MEN1, MGA, KAT8, PELP1, PHF20, PRP31, RING2, RUVBL1, RUVBL2, SENP3, TAF1, TAF4, TAF6, TAF7, TAF9 and TEX10. Component of a THAP1/THAP3-HCFC1-OGT complex that is required for the regulation of the transcriptional activity of RRM1. Interacts directly with THAP3 (via its HBM). Interacts (via the Kelch-repeat domain) with THAP1 (via the HBM); the interaction recruits HCHC1 to the RRM1. Interacts directly with OGT; the interaction, which requires the HCFC1 cleavage site domain, glycosylates and promotes the proteolytic processing of HCFC1 and retains OGT in the nucleus. Component of the SET1 complex, at least composed of the catalytic subunit (SETD1A or SETD1B), WDR5, WDR82, RBBP5, ASH2L, CXXC1, HCFC1 and DPY30. Component of the NSL complex at least composed of MOF/KAT8, KANSL1, KANSL2, KANSL3, MCRS1, PHF20, OGT1/OGT, WDR5 and HCFC1. Component of a complex at least composed of ZNF335, HCFC1, CCAR2, EMSY, MKI67, RBBP5, ASH2L and WDR5; the complex is formed as a result of interactions between components of a nuclear receptor-mediated transcription complex and a histone methylation complex. Within the complex interacts with ZNF335. Interacts with TET2 and TET3. Interacts with HCFC1R1. Interacts with THAP11. Interacts (via Kelch domain) with KMT2E (via HBM motif). Interacts with E2F1. Accessory scaffold component of the polycomb repressive deubiquitinase (PR-DUB) complex, at least composed of BAP1, one of ASXL1, ASXL2 or (probably) ASXL3 and one of MBD5 or MBD6; the PR-DUB core associates with a number of accessory proteins, including FOXK1, FOXK2, KDM1B, HCFC1, YY1 and OGT. Interacts with YY1 (via Gly-rich region); the interaction is direct. Interacts with BAP1 (via HBM-like motif). Proteolytically cleaved at one or several PPCE--THET sites within the HCF repeats. Cleavage is promoted by O-glycosylation. Further cleavage of the primary N- and C-terminal chains results in a 'trimming' and accumulation of the smaller chains. Cleavage is promoted by O-glycosylation. Post-translationally, O-glycosylated. GlcNAcylation by OGT promotes proteolytic processing. In terms of processing, ubiquitinated. Lys-1862 and Lys-1863 are ubiquitinated both via 'Lys-48'- and 'Lys-63'-linked polyubiquitin chains. BAP1 mediated deubiquitination of 'Lys-48'-linked polyubiquitin chains; deubiquitination by BAP1 does not seem to stabilize the protein.

The protein resides in the cytoplasm. The protein localises to the nucleus. In terms of biological role, transcriptional coregulator. Serves as a scaffold protein, bridging interactions between transcription factors, including THAP11 and ZNF143, and transcriptional coregulators. Involved in control of the cell cycle. Also antagonizes transactivation by ZBTB17 and GABP2; represses ZBTB17 activation of the p15(INK4b) promoter and inhibits its ability to recruit p300. Coactivator for EGR2 and GABP2. Tethers the chromatin modifying Set1/Ash2 histone H3 'Lys-4' methyltransferase (H3K4me) and Sin3 histone deacetylase (HDAC) complexes (involved in the activation and repression of transcription respectively) together. As part of the NSL complex it may be involved in acetylation of nucleosomal histone H4 on several lysine residues. Recruits KMT2E to E2F1 responsive promoters promoting transcriptional activation and thereby facilitates G1 to S phase transition. Modulates expression of homeobox protein PDX1, perhaps acting in concert with transcription factor E2F1, thereby regulating pancreatic beta-cell growth and glucose-stimulated insulin secretion. May negatively modulate transcriptional activity of FOXO3. The polypeptide is Host cell factor 1 (Mesocricetus auratus (Golden hamster)).